The following is a 613-amino-acid chain: Serine protease FAM111A (613 aa).

Residues 1–72 form a disordered region; the sequence is MSCKKRKSQI…TRQDQTPPLN (72 aa). Lysine 19 is covalently cross-linked (Glycyl lysine isopeptide (Lys-Gly) (interchain with G-Cter in SUMO2)). Serine 25 bears the Phosphoserine mark. Residue lysine 29 forms a Glycyl lysine isopeptide (Lys-Gly) (interchain with G-Cter in SUMO2) linkage. The segment covering 40–56 has biased composition (basic and acidic residues); the sequence is VDSKKMPRDITNTRDQR. Lysine 62 participates in a covalent cross-link: Glycyl lysine isopeptide (Lys-Gly) (interchain with G-Cter in SUMO2). Residues histidine 383, aspartate 437, and serine 543 each act as charge relay system in the active site.

It belongs to the FAM111 family. Interacts (via PIP-box) with PCNA; this interaction is direct. In terms of processing, autocatalytically cleaved; autocatalytic cleavage takes place in trans.

It is found in the nucleus. It localises to the chromosome. The protein resides in the cytoplasm. Functionally, single-stranded DNA-binding serine protease that mediates the proteolytic cleavage of covalent DNA-protein cross-links (DPCs) during DNA synthesis, thereby playing a key role in maintaining genomic integrity. DPCs are highly toxic DNA lesions that interfere with essential chromatin transactions, such as replication and transcription, and which are induced by reactive agents, such as UV light or formaldehyde. Protects replication fork from stalling by removing DPCs, such as covalently trapped topoisomerase 1 (TOP1) adducts on DNA lesion, or poly(ADP-ribose) polymerase 1 (PARP1)-DNA complexes trapped by PARP inhibitors. Required for PCNA loading on replication sites. Promotes S-phase entry and DNA synthesis. This chain is Serine protease FAM111A, found in Mus musculus (Mouse).